Reading from the N-terminus, the 232-residue chain is Enolase-phosphatase E1 (232 aa).

The protein belongs to the HAD-like hydrolase superfamily. MasA/MtnC family. Monomer. Mg(2+) is required as a cofactor.

It carries out the reaction 5-methylsulfanyl-2,3-dioxopentyl phosphate + H2O = 1,2-dihydroxy-5-(methylsulfanyl)pent-1-en-3-one + phosphate. It functions in the pathway amino-acid biosynthesis; L-methionine biosynthesis via salvage pathway; L-methionine from S-methyl-5-thio-alpha-D-ribose 1-phosphate: step 3/6. It participates in amino-acid biosynthesis; L-methionine biosynthesis via salvage pathway; L-methionine from S-methyl-5-thio-alpha-D-ribose 1-phosphate: step 4/6. Bifunctional enzyme that catalyzes the enolization of 2,3-diketo-5-methylthiopentyl-1-phosphate (DK-MTP-1-P) into the intermediate 2-hydroxy-3-keto-5-methylthiopentenyl-1-phosphate (HK-MTPenyl-1-P), which is then dephosphorylated to form the acireductone 1,2-dihydroxy-3-keto-5-methylthiopentene (DHK-MTPene). This chain is Enolase-phosphatase E1, found in Xanthomonas campestris pv. campestris (strain B100).